The chain runs to 152 residues: SMN complex subunit smn1 (152 aa).

Residues 26–51 (KKYHSIEAKGGVSDPDSRLDGEKLIS) are interacts with yip11/gem2. Residues 88-110 (DNKGLSDEKPETRAAETHQEFME) are disordered. Over residues 91–108 (GLSDEKPETRAAETHQEF) the composition is skewed to basic and acidic residues. The segment at 130–152 (SWYYAGYYTGLAEGLAKSEQRKD) is may interact with gem8.

The protein belongs to the SMN family. Homooligomer; may form homodimers and homotetramers. Part of the core SMN complex at least composed of smn1, yip11/gem2, gem6, gem7 and gem8. Part of the SMN-Sm complex. Interacts with yip11/gem2; the interaction is direct. Interacts with gem8; the interaction is direct. Interacts with proteins of the Sm complex, including smn1, smb1, smd1, smd2 and smd3.

The protein localises to the nucleus. Its function is as follows. The SMN complex catalyzes the assembly of small nuclear ribonucleoproteins (snRNPs), the building blocks of the spliceosome, and thereby plays an important role in the splicing of cellular pre-mRNAs. Most spliceosomal snRNPs contain a common set of Sm proteins smb1, smd1, smd2, smd3, sme1, smf1 and smg1 that assemble in a heptameric protein ring on the Sm site of the small nuclear RNA to form the core snRNP (Sm core). In the cytosol, the Sm proteins smd1, smd2, sme1, smf1 and smg1 (5Sm) are trapped in an inactive 6S pICln-Sm complex by the chaperone saf5 that controls the assembly of the core snRNP. To assemble core snRNPs, the SMN complex accepts the trapped 5Sm proteins from saf5 forming an intermediate. Binding of snRNA inside 5Sm triggers eviction of the SMN complex, thereby allowing binding of smd3 and smb1 to complete assembly of the core snRNP. Within the SMN complex, smn1 acts as a structural backbone and together with yip11/gem2 it gathers the Sm complex subunits. This is SMN complex subunit smn1 from Schizosaccharomyces pombe (strain 972 / ATCC 24843) (Fission yeast).